Reading from the N-terminus, the 631-residue chain is Chaperone protein DnaK (631 aa).

Phosphothreonine; by autocatalysis is present on Thr-197. The tract at residues 600 to 631 (KKENPQAADAQQGNTANAGKKKDDDVIDAEVE) is disordered.

Belongs to the heat shock protein 70 family.

Functionally, acts as a chaperone. The sequence is that of Chaperone protein DnaK from Wolinella succinogenes (strain ATCC 29543 / DSM 1740 / CCUG 13145 / JCM 31913 / LMG 7466 / NCTC 11488 / FDC 602W) (Vibrio succinogenes).